Consider the following 310-residue polypeptide: MPAIEKIQSVVNSAYAQFSKASGGANADYIPFLANIPSDLAAVAVVTAQGQVAAAGDAQYRFAIESISKVCTLALALEDFGPQAVQEKIGTSPTGLPFNSVMALELHGDKPLSPLVNAGAMASASLVKAGSTEERWQRILDMQRRLGSKEIAISDELNQSEQTTNFHNRGIAWLLYSAGYMYCDPMEACDVYTRQCSTLLNTVELATVGATIAARGRNPVTGEQVLKPEHCPCIMAEMTMEGMYDSSGDWAYKVGLPGKSGVGGGILTIVPGIMAIAAFSPPLDSVGNSVRGQKMAAFVANELGYNLYKA.

Residues Ser66, Asn117, Glu161, Asn168, Tyr192, Tyr244, and Val262 each contribute to the substrate site.

It belongs to the glutaminase family. As to quaternary structure, homotetramer.

The enzyme catalyses L-glutamine + H2O = L-glutamate + NH4(+). The chain is Glutaminase from Desulfovibrio desulfuricans (strain ATCC 27774 / DSM 6949 / MB).